Consider the following 309-residue polypeptide: Ribonuclease Z (309 aa).

Residues H63, H65, D67, H68, H141, D212, and H270 each contribute to the Zn(2+) site. Catalysis depends on D67, which acts as the Proton acceptor.

This sequence belongs to the RNase Z family. In terms of assembly, homodimer. Requires Zn(2+) as cofactor.

The catalysed reaction is Endonucleolytic cleavage of RNA, removing extra 3' nucleotides from tRNA precursor, generating 3' termini of tRNAs. A 3'-hydroxy group is left at the tRNA terminus and a 5'-phosphoryl group is left at the trailer molecule.. Functionally, zinc phosphodiesterase, which displays some tRNA 3'-processing endonuclease activity. Probably involved in tRNA maturation, by removing a 3'-trailer from precursor tRNA. In Lactobacillus johnsonii (strain CNCM I-12250 / La1 / NCC 533), this protein is Ribonuclease Z.